A 122-amino-acid chain; its full sequence is High-potential iron-sulfur protein (122 aa).

Positions 1 to 37 (MSDKPISKSRRDAVKVMLGTAAAIPMINLVGFGTARA) are cleaved as a signal peptide. The [4Fe-4S] cluster site is built by cysteine 80, cysteine 83, cysteine 100, and cysteine 114.

Belongs to the high-potential iron-sulfur protein (HiPIP) family. As to quaternary structure, homodimer.

The protein localises to the periplasm. Functionally, specific class of high-redox-potential 4Fe-4S ferredoxins. Functions in anaerobic electron transport in most purple and in some other photosynthetic bacteria and in at least one genus (Paracoccus) of halophilic, denitrifying bacteria. The protein is High-potential iron-sulfur protein (hip) of Allochromatium vinosum (strain ATCC 17899 / DSM 180 / NBRC 103801 / NCIMB 10441 / D) (Chromatium vinosum).